A 774-amino-acid chain; its full sequence is DNA ligase 3 (774 aa).

Positions 1–25 (MPPKKRMKNGSSLKSTSKKGEKSRN) are disordered. Catalysis depends on K433, which acts as the N6-AMP-lysine intermediate.

The protein belongs to the ATP-dependent DNA ligase family.

It localises to the nucleus. The catalysed reaction is ATP + (deoxyribonucleotide)n-3'-hydroxyl + 5'-phospho-(deoxyribonucleotide)m = (deoxyribonucleotide)n+m + AMP + diphosphate.. The chain is DNA ligase 3 (adl1) from Schizosaccharomyces pombe (strain 972 / ATCC 24843) (Fission yeast).